Consider the following 73-residue polypeptide: Translation initiation factor IF-1 (73 aa).

In terms of domain architecture, S1-like spans 1-72; that stretch reads MPKKDAIEVE…TRGRVTYRFK (72 aa).

This sequence belongs to the IF-1 family. In terms of assembly, component of the 30S ribosomal translation pre-initiation complex which assembles on the 30S ribosome in the order IF-2 and IF-3, IF-1 and N-formylmethionyl-tRNA(fMet); mRNA recruitment can occur at any time during PIC assembly.

Its subcellular location is the cytoplasm. Functionally, one of the essential components for the initiation of protein synthesis. Stabilizes the binding of IF-2 and IF-3 on the 30S subunit to which N-formylmethionyl-tRNA(fMet) subsequently binds. Helps modulate mRNA selection, yielding the 30S pre-initiation complex (PIC). Upon addition of the 50S ribosomal subunit IF-1, IF-2 and IF-3 are released leaving the mature 70S translation initiation complex. In Dehalococcoides mccartyi (strain ATCC BAA-2266 / KCTC 15142 / 195) (Dehalococcoides ethenogenes (strain 195)), this protein is Translation initiation factor IF-1.